A 180-amino-acid polypeptide reads, in one-letter code: High mobility group protein B1 (180 aa).

The Nuclear localization signal (NLS) 1 signature appears at 1-8 (VNFSEFSK). The segment at residues 1–44 (VNFSEFSKKCSERWKTMSAKEKGKFEDMAKADKARYEREMKTYI) is a DNA-binding region (HMG box 1). Lysine 8 is subject to N6-acetyllysine. Isoglutamyl lysine isopeptide (Lys-Gln) (interchain with Q-?) cross-links involve residues lysine 8 and lysine 9. The residue at position 10 (cysteine 10) is a Cysteine sulfonic acid (-SO3H). An Isoglutamyl lysine isopeptide (Lys-Gln) (interchain with Q-?) cross-link involves residue lysine 33. The LPS binding (Lipid A) stretch occupies residues 45–61 (PPKGETKKKFKDPNAPK). The interval 54 to 73 (FKDPNAPKRPPSAFFLFCSE) is cytokine-stimulating activity. N6-acetyllysine is present on lysine 55. A DNA-binding region (HMG box 2) is located at residues 60 to 128 (PKRPPSAFFL…KYEKDIAAYR (69 aa)). Phosphoserine is present on serine 65. Position 71 is a cysteine sulfonic acid (-SO3H) (cysteine 71). Lysine 92, lysine 93, lysine 106, lysine 137, lysine 138, lysine 142, and lysine 145 each carry N6-acetyllysine. Positions 115 to 148 (KLKEKYEKDIAAYRAKGKPDAAKKGVVKAEKSKK) are binding to AGER/RAGE. Basic and acidic residues predominate over residues 126-144 (AYRAKGKPDAAKKGVVKAE). Residues 126–180 (AYRAKGKPDAAKKGVVKAEKSKKKKEEEDDEEDEEDEEEEEEEEDEDEEEDDDDE) form a disordered region. The Nuclear localization signal (NLS) 2 signature appears at 143-149 (AEKSKKK). The segment at 143–149 (AEKSKKK) is NLS 2. Residue lysine 145 forms an Isoglutamyl lysine isopeptide (Lys-Gln) (interchain with Q-?) linkage. ADP-ribosylserine is present on serine 146. An N6-acetyllysine mark is found at lysine 147, lysine 148, lysine 149, and lysine 150. Residues lysine 147, lysine 148, and lysine 149 each participate in an isoglutamyl lysine isopeptide (Lys-Gln) (interchain with Q-?) cross-link. Residues 152 to 180 (EEDDEEDEEDEEEEEEEEDEDEEEDDDDE) show a composition bias toward acidic residues.

It belongs to the HMGB family. In terms of assembly, interacts (fully reduced HMGB1) with CXCL12; probably in a 1:2 ratio involving two molecules of CXCL12, each interacting with one HMG box of HMGB1; inhibited by glycyrrhizin. Associates with the TLR4:LY96 receptor complex. Component of the RAG complex composed of core components RAG1 and RAG2, and associated component HMGB1 or HMGB2. Interacts (in cytoplasm upon starvation) with BECN1; inhibits the interaction of BECN1 and BCL2 leading to promotion of autophagy. Interacts with KPNA1; involved in nuclear import. Interacts with SREBF1, TLR2, TLR4, TLR9, PTPRZ1, APEX1, FEN1, POLB, TERT. Interacts with IL1B, AGER, MSH2, XPA, XPC, HNF1A, TP53. Interacts with CD24; the probable CD24:SIGLEC10 complex is proposed to inhibit HGMB1-mediated tissue damage immune response. Interacts with THBD; prevents HGMB1 interaction with ACER/RAGE and inhibits HGMB1 pro-inflammatory activity. Interacts with HAVCR2; impairs HMGB1 binding to B-DNA and likely HMGB1-mediated innate immune response. Interacts with XPO1; mediating nuclear export. Interacts with receptor RAGE/AGER. Post-translationally, phosphorylated at serine residues. Phosphorylation in both NLS regions is required for cytoplasmic translocation followed by secretion. In terms of processing, acetylated on multiple sites upon stimulation with LPS. Acetylation on lysine residues in the nuclear localization signals (NLS 1 and NLS 2) leads to cytoplasmic localization and subsequent secretion. Reduction/oxidation of cysteine residues and a possible intramolecular disulfide bond give rise to different redox forms with specific functional activities in various cellular compartments: 1- fully reduced HMGB1 (HMGB1C23hC45hC106h), 2-disulfide HMGB1 (HMGB1C23-C45C106h) and 3- sulfonyl HMGB1 (HMGB1C23soC45soC106so). Post-translationally, poly-ADP-ribosylated by PARP1 when secreted following stimulation with LPS. In terms of processing, in vitro cleavage by CASP1 is liberating a HMG box 1-containing peptide which may mediate immunogenic activity; the peptide antagonizes apoptosis-induced immune tolerance. Can be proteolytically cleaved by a thrombin:thrombomodulin complex; reduces binding to heparin and pro-inflammatory activities. Forms covalent cross-links mediated by transglutaminase TGM2, between a glutamine and the epsilon-amino group of a lysine residue, forming homopolymers and heteropolymers.

The protein localises to the nucleus. The protein resides in the chromosome. Its subcellular location is the cytoplasm. It localises to the secreted. It is found in the cell membrane. The protein localises to the endosome. The protein resides in the endoplasmic reticulum-Golgi intermediate compartment. Multifunctional redox sensitive protein with various roles in different cellular compartments. In the nucleus is one of the major chromatin-associated non-histone proteins and acts as a DNA chaperone involved in replication, transcription, chromatin remodeling, V(D)J recombination, DNA repair and genome stability. Proposed to be an universal biosensor for nucleic acids. Promotes host inflammatory response to sterile and infectious signals and is involved in the coordination and integration of innate and adaptive immune responses. In the cytoplasm functions as a sensor and/or chaperone for immunogenic nucleic acids implicating the activation of TLR9-mediated immune responses, and mediates autophagy. Acts as a danger-associated molecular pattern (DAMP) molecule that amplifies immune responses during tissue injury. Released to the extracellular environment can bind DNA, nucleosomes, IL-1 beta, CXCL12, AGER isoform 2/sRAGE, lipopolysaccharide (LPS) and lipoteichoic acid (LTA), and activates cells through engagement of multiple surface receptors. In the extracellular compartment fully reduced HMGB1 (released by necrosis) acts as a chemokine, disulfide HMGB1 (actively secreted) as a cytokine, and sulfonyl HMGB1 (released from apoptotic cells) promotes immunological tolerance. Has proangiogenic activity. May be involved in platelet activation. Binds to phosphatidylserine and phosphatidylethanolamide. Bound to RAGE mediates signaling for neuronal outgrowth. May play a role in accumulation of expanded polyglutamine (polyQ) proteins. In terms of biological role, nuclear functions are attributed to fully reduced HGMB1. Associates with chromatin and binds DNA with a preference to non-canonical DNA structures such as single-stranded DNA, DNA-containing cruciforms or bent structures, supercoiled DNA and ZDNA. Can bent DNA and enhance DNA flexibility by looping thus providing a mechanism to promote activities on various gene promoters by enhancing transcription factor binding and/or bringing distant regulatory sequences into close proximity. May be involved in nucleotide excision repair (NER), mismatch repair (MMR) and base excision repair (BER) pathways, and double strand break repair such as non-homologous end joining (NHEJ). Involved in V(D)J recombination by acting as a cofactor of the RAG complex: acts by stimulating cleavage and RAG protein binding at the 23 bp spacer of conserved recombination signal sequences (RSS). In vitro can displace histone H1 from highly bent DNA. Can restructure the canonical nucleosome leading to relaxation of structural constraints for transcription factor-binding. Enhances binding of sterol regulatory element-binding proteins (SREBPs) such as SREBF1 to their cognate DNA sequences and increases their transcriptional activities. Facilitates binding of TP53 to DNA. May be involved in mitochondrial quality control and autophagy in a transcription-dependent fashion implicating HSPB1. Can modulate the activity of the telomerase complex and may be involved in telomere maintenance. Its function is as follows. In the cytoplasm proposed to dissociate the BECN1:BCL2 complex via competitive interaction with BECN1 leading to autophagy activation. Can protect BECN1 and ATG5 from calpain-mediated cleavage and thus proposed to control their proautophagic and proapoptotic functions and to regulate the extent and severity of inflammation-associated cellular injury. In myeloid cells has a protective role against endotoxemia and bacterial infection by promoting autophagy. Involved in endosomal translocation and activation of TLR9 in response to CpG-DNA in macrophages. Functionally, in the extracellular compartment (following either active secretion or passive release) involved in regulation of the inflammatory response. Fully reduced HGMB1 (which subsequently gets oxidized after release) in association with CXCL12 mediates the recruitment of inflammatory cells during the initial phase of tissue injury; the CXCL12:HMGB1 complex triggers CXCR4 homodimerization. Induces the migration of monocyte-derived immature dendritic cells and seems to regulate adhesive and migratory functions of neutrophils implicating AGER/RAGE and ITGAM. Can bind to various types of DNA and RNA including microbial unmethylated CpG-DNA to enhance the innate immune response to nucleic acids. Proposed to act in promiscuous DNA/RNA sensing which cooperates with subsequent discriminative sensing by specific pattern recognition receptors. Promotes extracellular DNA-induced AIM2 inflammasome activation implicating AGER/RAGE. Disulfide HMGB1 binds to transmembrane receptors, such as AGER/RAGE, TLR2, TLR4 and probably TREM1, thus activating their signal transduction pathways. Mediates the release of cytokines/chemokines such as TNF, IL-1, IL-6, IL-8, CCL2, CCL3, CCL4 and CXCL10. Promotes secretion of interferon-gamma by macrophage-stimulated natural killer (NK) cells in concert with other cytokines like IL-2 or IL-12. TLR4 is proposed to be the primary receptor promoting macrophage activation and signaling through TLR4 seems to implicate LY96/MD-2. In bacterial LPS- or LTA-mediated inflammatory responses binds to the endotoxins and transfers them to CD14 for signaling to the respective TLR4:LY96 and TLR2 complexes. Contributes to tumor proliferation by association with ACER/RAGE. Can bind to IL1-beta and signals through the IL1R1:IL1RAP receptor complex. Binding to class A CpG activates cytokine production in plasmacytoid dendritic cells implicating TLR9, MYD88 and AGER/RAGE and can activate autoreactive B cells. Via HMGB1-containing chromatin immune complexes may also promote B cell responses to endogenous TLR9 ligands through a B-cell receptor (BCR)-dependent and ACER/RAGE-independent mechanism. Inhibits phagocytosis of apoptotic cells by macrophages; the function is dependent on poly-ADP-ribosylation and involves binding to phosphatidylserine on the cell surface of apoptotic cells. In adaptive immunity may be involved in enhancing immunity through activation of effector T-cells and suppression of regulatory T (TReg) cells. In contrast, without implicating effector or regulatory T-cells, required for tumor infiltration and activation of T-cells expressing the lymphotoxin LTA:LTB heterotrimer thus promoting tumor malignant progression. Also reported to limit proliferation of T-cells. Released HMGB1:nucleosome complexes formed during apoptosis can signal through TLR2 to induce cytokine production. Involved in induction of immunological tolerance by apoptotic cells; its pro-inflammatory activities when released by apoptotic cells are neutralized by reactive oxygen species (ROS)-dependent oxidation specifically on Cys-106. During macrophage activation by activated lymphocyte-derived self apoptotic DNA (ALD-DNA) promotes recruitment of ALD-DNA to endosomes. This chain is High mobility group protein B1 (HMGB1), found in Cricetulus griseus (Chinese hamster).